Here is a 505-residue protein sequence, read N- to C-terminus: Katanin p60 ATPase-containing subunit A-like 2 (505 aa).

In terms of domain architecture, LisH spans 25 to 57 (RRKNLLILIMHYLLQEGYVDSANSLEQETKISS). 2 disordered regions span residues 94–127 (LDHD…IGQQ) and 140–167 (RTNG…EASE). Composition is skewed to polar residues over residues 114 to 127 (GSNS…IGQQ) and 155 to 164 (QESGGNSPQE). 298–305 (GPPGTGKT) lines the ATP pocket.

It belongs to the AAA ATPase family. Katanin p60 subunit A1 subfamily. A-like 2 sub-subfamily.

Its subcellular location is the cytoplasm. It is found in the cytoskeleton. It localises to the spindle. The protein resides in the spindle pole. It carries out the reaction n ATP + n H2O + a microtubule = n ADP + n phosphate + (n+1) alpha/beta tubulin heterodimers.. In terms of biological role, severs microtubules in vitro in an ATP-dependent manner. This activity may promote rapid reorganization of cellular microtubule arrays. This is Katanin p60 ATPase-containing subunit A-like 2 (katnal2) from Xenopus laevis (African clawed frog).